Reading from the N-terminus, the 492-residue chain is Glutamyl-tRNA(Gln) amidotransferase subunit B, mitochondrial (492 aa).

Belongs to the GatB/GatE family. GatB subfamily. Subunit of the heterotrimeric GatFAB amidotransferase (AdT) complex, composed of A, B and F subunits.

The protein resides in the mitochondrion. The catalysed reaction is L-glutamyl-tRNA(Gln) + L-glutamine + ATP + H2O = L-glutaminyl-tRNA(Gln) + L-glutamate + ADP + phosphate + H(+). Functionally, allows the formation of correctly charged Gln-tRNA(Gln) through the transamidation of misacylated Glu-tRNA(Gln) in the mitochondria. The reaction takes place in the presence of glutamine and ATP through an activated gamma-phospho-Glu-tRNA(Gln). The chain is Glutamyl-tRNA(Gln) amidotransferase subunit B, mitochondrial from Komagataella phaffii (strain GS115 / ATCC 20864) (Yeast).